Consider the following 245-residue polypeptide: Phosphoribosylaminoimidazole-succinocarboxamide synthase (245 aa).

The protein belongs to the SAICAR synthetase family.

The enzyme catalyses 5-amino-1-(5-phospho-D-ribosyl)imidazole-4-carboxylate + L-aspartate + ATP = (2S)-2-[5-amino-1-(5-phospho-beta-D-ribosyl)imidazole-4-carboxamido]succinate + ADP + phosphate + 2 H(+). Its pathway is purine metabolism; IMP biosynthesis via de novo pathway; 5-amino-1-(5-phospho-D-ribosyl)imidazole-4-carboxamide from 5-amino-1-(5-phospho-D-ribosyl)imidazole-4-carboxylate: step 1/2. The sequence is that of Phosphoribosylaminoimidazole-succinocarboxamide synthase from Nostoc sp. (strain PCC 7120 / SAG 25.82 / UTEX 2576).